The sequence spans 266 residues: Large ribosomal subunit protein uL4 (266 aa).

It belongs to the universal ribosomal protein uL4 family. Part of the 50S ribosomal subunit.

One of the primary rRNA binding proteins, this protein initially binds near the 5'-end of the 23S rRNA. It is important during the early stages of 50S assembly. It makes multiple contacts with different domains of the 23S rRNA in the assembled 50S subunit and ribosome. Its function is as follows. Forms part of the polypeptide exit tunnel. In Sulfurisphaera tokodaii (strain DSM 16993 / JCM 10545 / NBRC 100140 / 7) (Sulfolobus tokodaii), this protein is Large ribosomal subunit protein uL4.